Consider the following 448-residue polypeptide: N-succinylarginine dihydrolase (448 aa).

Residues 19–28 (GGLSYGNVAS), Asn-110, and 137–138 (HR) each bind substrate. The active site involves Glu-174. Arg-214 serves as a coordination point for substrate. His-250 is an active-site residue. Substrate-binding residues include Asp-252 and Asn-365. The active-site Nucleophile is the Cys-371.

This sequence belongs to the succinylarginine dihydrolase family. As to quaternary structure, homodimer.

It carries out the reaction N(2)-succinyl-L-arginine + 2 H2O + 2 H(+) = N(2)-succinyl-L-ornithine + 2 NH4(+) + CO2. Its pathway is amino-acid degradation; L-arginine degradation via AST pathway; L-glutamate and succinate from L-arginine: step 2/5. Catalyzes the hydrolysis of N(2)-succinylarginine into N(2)-succinylornithine, ammonia and CO(2). The protein is N-succinylarginine dihydrolase of Pseudomonas fluorescens (strain Pf0-1).